The sequence spans 919 residues: Leucine--tRNA ligase (919 aa).

The short motif at 83–93 is the 'HIGH' region element; it reads PYPSGKLHMGH. The short motif at 670 to 674 is the 'KMSKS' region element; the sequence is KMSKS. Lys-673 is an ATP binding site.

It belongs to the class-I aminoacyl-tRNA synthetase family.

It is found in the cytoplasm. It catalyses the reaction tRNA(Leu) + L-leucine + ATP = L-leucyl-tRNA(Leu) + AMP + diphosphate. The chain is Leucine--tRNA ligase from Psychrobacter cryohalolentis (strain ATCC BAA-1226 / DSM 17306 / VKM B-2378 / K5).